The primary structure comprises 178 residues: Crossover junction endodeoxyribonuclease RuvC (178 aa).

Active-site residues include D20, E80, and D154. 3 residues coordinate Mg(2+): D20, E80, and D154.

The protein belongs to the RuvC family. Homodimer which binds Holliday junction (HJ) DNA. The HJ becomes 2-fold symmetrical on binding to RuvC with unstacked arms; it has a different conformation from HJ DNA in complex with RuvA. In the full resolvosome a probable DNA-RuvA(4)-RuvB(12)-RuvC(2) complex forms which resolves the HJ. It depends on Mg(2+) as a cofactor.

It is found in the cytoplasm. The catalysed reaction is Endonucleolytic cleavage at a junction such as a reciprocal single-stranded crossover between two homologous DNA duplexes (Holliday junction).. In terms of biological role, the RuvA-RuvB-RuvC complex processes Holliday junction (HJ) DNA during genetic recombination and DNA repair. Endonuclease that resolves HJ intermediates. Cleaves cruciform DNA by making single-stranded nicks across the HJ at symmetrical positions within the homologous arms, yielding a 5'-phosphate and a 3'-hydroxyl group; requires a central core of homology in the junction. The consensus cleavage sequence is 5'-(A/T)TT(C/G)-3'. Cleavage occurs on the 3'-side of the TT dinucleotide at the point of strand exchange. HJ branch migration catalyzed by RuvA-RuvB allows RuvC to scan DNA until it finds its consensus sequence, where it cleaves and resolves the cruciform DNA. The polypeptide is Crossover junction endodeoxyribonuclease RuvC (Rhodopirellula baltica (strain DSM 10527 / NCIMB 13988 / SH1)).